Here is a 252-residue protein sequence, read N- to C-terminus: Phosphomannomutase (252 aa).

The active-site Nucleophile is the D13. Residues D13 and D15 each contribute to the Mg(2+) site. The Proton donor/acceptor role is filled by D15. R22, R124, R135, R142, S180, and D182 together coordinate alpha-D-mannose 1-phosphate. Mg(2+) is bound by residues D208, Y220, and T225.

Belongs to the eukaryotic PMM family. Homodimer. Mg(2+) is required as a cofactor.

The protein localises to the cytoplasm. The catalysed reaction is alpha-D-mannose 1-phosphate = D-mannose 6-phosphate. Its pathway is nucleotide-sugar biosynthesis; GDP-alpha-D-mannose biosynthesis; alpha-D-mannose 1-phosphate from D-fructose 6-phosphate: step 2/2. Its function is as follows. Catalyzes the interconversion of mannose-6-phosphate to mannose-1-phosphate, the precursor for the synthesis of GDP-mannose. GDP-mannose is an essential sugar nucleotide for the synthesis of D-mannose-containing cell wall polysaccharides (galactomannans and glucomannans), glycolipids, glycoproteins and the antioxidant L-ascorbate. Can complement the yeast temperature-sensitive mutant sec53-6. The chain is Phosphomannomutase from Solanum lycopersicum (Tomato).